Reading from the N-terminus, the 241-residue chain is Putative ABC transporter ATP-binding protein CA_C0773 (241 aa).

Positions 2–241 (IKLEKVSFTY…REFLMECNII (240 aa)) constitute an ABC transporter domain. 34-41 (GPNGSGKS) provides a ligand contact to ATP.

Belongs to the ABC transporter superfamily.

The protein localises to the cell membrane. Its function is as follows. Probably part of an ABC transporter complex. Responsible for energy coupling to the transport system. This Clostridium acetobutylicum (strain ATCC 824 / DSM 792 / JCM 1419 / IAM 19013 / LMG 5710 / NBRC 13948 / NRRL B-527 / VKM B-1787 / 2291 / W) protein is Putative ABC transporter ATP-binding protein CA_C0773.